The chain runs to 470 residues: Pancreatic lipase-related protein 2 (470 aa).

Residues 1 to 18 (MMLFVWTTGLLLLATARG) form the signal peptide. A disulfide bridge links Cys-22 with Cys-28. A required for galactolipase activity region spans residues 94–106 (IHGFIDNGEKDWL). Cys-110 and Cys-121 are oxidised to a cystine. Ser-172 serves as the catalytic Nucleophile. Asp-196 (charge relay system) is an active-site residue. Residues Glu-207, Arg-210, Asp-212, and Asp-215 each contribute to the Ca(2+) site. Cys-257 and Cys-281 are disulfide-bonded. The interval 258–280 (EKNIISTIVDVNGFLEGITSLAA) is required for galactolipase activity. The Charge relay system role is filled by His-283. Disulfide bonds link Cys-305–Cys-316 and Cys-319–Cys-324. N-linked (GlcNAc...) asparagine glycosylation is found at Asn-354 and Asn-429. The PLAT domain maps to 358-470 (WRYKVSVTLS…EDVLQSLSPC (113 aa)). Cys-454 and Cys-470 are oxidised to a cystine.

It belongs to the AB hydrolase superfamily. Lipase family. Pancreas.

The protein localises to the secreted. It is found in the zymogen granule membrane. The protein resides in the cell projection. Its subcellular location is the neuron projection. The enzyme catalyses a triacylglycerol + H2O = a diacylglycerol + a fatty acid + H(+). It carries out the reaction a 1,2-diacyl-3-O-(beta-D-galactosyl)-sn-glycerol + 2 H2O = 3-beta-D-galactosyl-sn-glycerol + 2 a fatty acid + 2 H(+). The catalysed reaction is 1,2,3-tri-(9Z-octadecenoyl)-glycerol + H2O = di-(9Z)-octadecenoylglycerol + (9Z)-octadecenoate + H(+). It catalyses the reaction di-(9Z)-octadecenoylglycerol + H2O = (9Z-octadecenoyl)-glycerol + (9Z)-octadecenoate + H(+). The enzyme catalyses (9Z-octadecenoyl)-glycerol + H2O = glycerol + (9Z)-octadecenoate + H(+). It carries out the reaction 1-(9Z-octadecenoyl)-glycerol + H2O = glycerol + (9Z)-octadecenoate + H(+). The catalysed reaction is 1,2,3-tripropanoylglycerol + H2O = dipropanoylglycerol + propanoate + H(+). It catalyses the reaction 1,2,3-tributanoylglycerol + H2O = dibutanoylglycerol + butanoate + H(+). The enzyme catalyses 1,2,3-trioctanoylglycerol + H2O = dioctanoylglycerol + octanoate + H(+). It carries out the reaction 1,2-didecanoylglycerol + H2O = decanoylglycerol + decanoate + H(+). The catalysed reaction is long chain 1,2-diacyl-3-O-beta-D-galactosyl-sn-glycerol + H2O = long chain acyl-3-O-beta-D-galactosyl-sn-glycerol + a fatty acid + H(+). It catalyses the reaction 1,2-dioctanoyl-3-O-beta-D-galactosyl-sn-glycerol + H2O = octanoyl-3-(beta-D-galactosyl)-sn-glycerol + octanoate + H(+). The enzyme catalyses 1,2-didodecanoyl-3-beta-D-galactosyl-sn-glycerol + H2O = dodecanoyl-3-beta-D-galactosyl-sn-glycerol + dodecanoate + H(+). It carries out the reaction 1-beta-D-galactosyl-2,3-didodecanoyl-sn-glycerol + H2O = 1-beta-D-galactosyl-dodecanoyl-sn-glycerol + dodecanoate + H(+). The catalysed reaction is a 1,2-diacyl-3-O-[alpha-D-galactosyl-(1-&gt;6)-beta-D-galactosyl]-sn-glycerol + H2O = acyl-3-O-[alpha-D-galactosyl-(1-&gt;6)-beta-D-galactosyl]-sn-glycerol + a fatty acid + H(+). It catalyses the reaction long chain 1,2-diacyl-3-O-[alpha-D-galactosyl-(1-&gt;6)-beta-D-galactosyl]-sn-glycerol + H2O = long chain acyl-3-O-[alpha-D-galactosyl-(1-&gt;6)-beta-D-galactosyl]-sn-glycerol + a fatty acid + H(+). The enzyme catalyses 1,2-dioctanoyl-3-O-[alpha-D-galactosyl-(1-&gt;6)-beta-D-galactosyl]-sn-glycerol + H2O = octanoyl-3-O-[alpha-D-galactosyl-(1-&gt;6)-beta-D-galactosyl]-sn-glycerol + octanoate + H(+). It carries out the reaction 1,2-didodecanoyl-3-O-[alpha-D-galactosyl-(1-&gt;6)-beta-D-galactosyl]-sn-glycerol + H2O = dodecanoyl-3-O-[alpha-D-galactosyl-(1-&gt;6)-beta-D-galactosyl]-sn-glycerol + dodecanoate + H(+). The catalysed reaction is a 1,2-diacyl-sn-glycero-3-phosphocholine + H2O = a monoacyl-sn-glycero-3-phosphocholine + a fatty acid + H(+). It participates in glycerolipid metabolism; triacylglycerol degradation. The protein operates within glycolipid metabolism. Triacylglycerol lipase activity is inhibited by increasing bile salts concentrations and not reactivated by CLPS. In terms of biological role, lipase that primarily hydrolyzes triglycerides and galactosylglycerides. In neonates, may play a major role in pancreatic digestion of dietary fats such as milk fat globules enriched in long-chain triglycerides. Hydrolyzes short-, medium- and long-chain fatty acyls in triglycerides without apparent positional specificity. Can completely deacylate triacylglycerols. When the liver matures and bile salt synthesis increases, likely functions mainly as a galactolipase and monoacylglycerol lipase. Hydrolyzes monogalactosyldiglycerols (MGDG) and digalactosyldiacylglycerols (DGDG) present in a plant-based diet, releasing long-chain polyunsaturated fatty acids. Hydrolyzes medium- and long-chain fatty acyls in galactolipids. May act together with LIPF to hydrolyze partially digested triglycerides. Hydrolyzes long-chain monoglycerides with high efficiency. In cytotoxic T cells, contributes to perforin-dependent cell lysis, but is unlikely to mediate direct cytotoxicity. Also has low phospholipase activity. In neurons, required for the localization of the phospholipid 1-oleoyl-2-palmitoyl-PC (OPPC) to neurite tips through acyl chain remodeling of membrane phospholipids. The resulting OPPC-rich lipid membrane domain recruits the t-SNARE protein STX4 by selectively interacting with the STX4 transmembrane domain and this promotes surface expression of the dopamine transporter SLC6A3/DAT at neurite tips by facilitating fusion of SLC6A3-containing transport vesicles with the plasma membrane. This chain is Pancreatic lipase-related protein 2, found in Myocastor coypus (Coypu).